A 267-amino-acid polypeptide reads, in one-letter code: Putative F-box protein At1g61060 (267 aa).

Residues 15-63 (DYFDAIHVDLFTAKILSKLPVKSIAQCRCVSKLWSSQIRRPYYNMLFPI) enclose the F-box domain.

The protein is Putative F-box protein At1g61060 of Arabidopsis thaliana (Mouse-ear cress).